Reading from the N-terminus, the 523-residue chain is 2-hydroxyisoflavanone synthase (523 aa).

A helical transmembrane segment spans residues 2-22; that stretch reads LVELAITLLVIALFIHLRPTP. C450 is a heme binding site.

Belongs to the cytochrome P450 family. Heme is required as a cofactor.

The protein resides in the microsome membrane. It catalyses the reaction (2S)-liquiritigenin + reduced [NADPH--hemoprotein reductase] + O2 = (2R,3S)-2,4',7-trihydroxyisoflavanone + oxidized [NADPH--hemoprotein reductase] + H2O + H(+). The catalysed reaction is (2S)-naringenin + reduced [NADPH--hemoprotein reductase] + O2 = 2-hydroxy-2,3-dihydrogenistein + oxidized [NADPH--hemoprotein reductase] + H2O + H(+). Its function is as follows. 2-hydroxyisoflavanone synthase, which catalyzes the hydroxylation associated with 1,2-aryl migration of flavanones. Converts liquiritigenin and naringenin into highly unstable precursors of the isoflavones daidzein and genistein. This Glycyrrhiza uralensis (Chinese licorice) protein is 2-hydroxyisoflavanone synthase (CYP93C2).